A 788-amino-acid chain; its full sequence is Auxin response factor 4 (788 aa).

Residues 1-19 (MEFDLNTEIAEVEEEENDD) are compositionally biased toward acidic residues. Positions 1–53 (MEFDLNTEIAEVEEEENDDVGVGVGGGTRIDKGRLGISPSSSSSCSSGSSSSS) are disordered. Over residues 38–53 (SPSSSSSCSSGSSSSS) the composition is skewed to low complexity. The TF-B3 DNA-binding region spans 177–279 (FCKTLTASDT…ELRLGIRRAA (103 aa)). The segment at 413 to 433 (LSIQSSPRPKRPWAGLLDTTP) is disordered. A PB1 domain is found at 665–747 (RICTKVHKQG…VVWKIHLYTK (83 aa)).

The protein belongs to the ARF family. Homodimers and heterodimers. In terms of tissue distribution, expressed in the whole plant.

It localises to the nucleus. Functionally, auxin response factors (ARFs) are transcriptional factors that bind specifically to the DNA sequence 5'-TGTCTC-3' found in the auxin-responsive promoter elements (AuxREs). Could act as transcriptional activator or repressor. Formation of heterodimers with Aux/IAA proteins may alter their ability to modulate early auxin response genes expression. The chain is Auxin response factor 4 (ARF4) from Arabidopsis thaliana (Mouse-ear cress).